The chain runs to 235 residues: Uridylate kinase (235 aa).

10–11 serves as a coordination point for ATP; it reads GS. G45 lines the UMP pocket. ATP-binding residues include G46 and R50. UMP-binding positions include D67 and 115-121; that span reads VTPGQTT. ATP-binding residues include T141, Y147, and D150.

The protein belongs to the UMP kinase family. Homohexamer.

It localises to the cytoplasm. The enzyme catalyses UMP + ATP = UDP + ADP. Its pathway is pyrimidine metabolism; CTP biosynthesis via de novo pathway; UDP from UMP (UMPK route): step 1/1. With respect to regulation, inhibited by UTP. Catalyzes the reversible phosphorylation of UMP to UDP. This is Uridylate kinase from Methanocorpusculum labreanum (strain ATCC 43576 / DSM 4855 / Z).